Consider the following 462-residue polypeptide: GTPase Der (462 aa).

EngA-type G domains are found at residues 9-171 (KTIA…GLTK) and 201-372 (IQVG…ECFS). Residues 15–22 (GQPNVGKS), 62–66 (DTGGM), 123–126 (NKID), 207–214 (GRVNVGKS), 254–258 (DTAGI), and 318–321 (NKWD) each bind GTP. In terms of domain architecture, KH-like spans 373 to 457 (KRIPTSLLNS…PLIINAKDKK (85 aa)).

Belongs to the TRAFAC class TrmE-Era-EngA-EngB-Septin-like GTPase superfamily. EngA (Der) GTPase family. Associates with the 50S ribosomal subunit.

Its function is as follows. GTPase that plays an essential role in the late steps of ribosome biogenesis. The polypeptide is GTPase Der (Helicobacter acinonychis (strain Sheeba)).